The sequence spans 124 residues: Glycine cleavage system H protein (124 aa).

Residues 22 to 104 enclose the Lipoyl-binding domain; that stretch reads KAKVGITDFA…YENGYLFIIE (83 aa). At Lys63 the chain carries N6-lipoyllysine.

The protein belongs to the GcvH family. As to quaternary structure, the glycine cleavage system is composed of four proteins: P, T, L and H. (R)-lipoate serves as cofactor.

The glycine cleavage system catalyzes the degradation of glycine. The H protein shuttles the methylamine group of glycine from the P protein to the T protein. The protein is Glycine cleavage system H protein of Endomicrobium trichonymphae.